The chain runs to 360 residues: GTP 3',8-cyclase 2 (360 aa).

Residues 33–259 form the Radical SAM core domain; sequence TFGRVANDLR…PDPAPRGSAP (227 aa). R42 contacts GTP. [4Fe-4S] cluster contacts are provided by C49 and C53. Y55 serves as a coordination point for S-adenosyl-L-methionine. C56 contacts [4Fe-4S] cluster. GTP is bound at residue R93. Residue G97 coordinates S-adenosyl-L-methionine. T124 provides a ligand contact to GTP. S148 contacts S-adenosyl-L-methionine. K185 lines the GTP pocket. An S-adenosyl-L-methionine-binding site is contributed by M219. Residues C287 and C290 each contribute to the [4Fe-4S] cluster site. 292 to 294 lines the GTP pocket; sequence RTR. C304 contributes to the [4Fe-4S] cluster binding site.

It belongs to the radical SAM superfamily. MoaA family. As to quaternary structure, monomer and homodimer. [4Fe-4S] cluster is required as a cofactor.

The enzyme catalyses GTP + AH2 + S-adenosyl-L-methionine = (8S)-3',8-cyclo-7,8-dihydroguanosine 5'-triphosphate + 5'-deoxyadenosine + L-methionine + A + H(+). The protein operates within cofactor biosynthesis; molybdopterin biosynthesis. Its function is as follows. Catalyzes the cyclization of GTP to (8S)-3',8-cyclo-7,8-dihydroguanosine 5'-triphosphate. The chain is GTP 3',8-cyclase 2 from Mycobacterium bovis (strain ATCC BAA-935 / AF2122/97).